A 90-amino-acid polypeptide reads, in one-letter code: Defensin-like protein 178 (90 aa).

An N-terminal signal peptide occupies residues 1–23 (MAKATSSLVVPIIFLVIFALVEQ). Cystine bridges form between cysteine 27–cysteine 66, cysteine 36–cysteine 55, cysteine 39–cysteine 60, and cysteine 43–cysteine 62.

Belongs to the DEFL family.

The protein resides in the secreted. This chain is Defensin-like protein 178 (LCR64), found in Arabidopsis thaliana (Mouse-ear cress).